Consider the following 141-residue polypeptide: Galactose-6-phosphate isomerase subunit LacA 1 (141 aa).

The protein belongs to the LacAB/RpiB family. Heteromultimeric protein consisting of LacA and LacB.

It carries out the reaction aldehydo-D-galactose 6-phosphate = keto-D-tagatose 6-phosphate. The protein operates within carbohydrate metabolism; D-galactose 6-phosphate degradation; D-tagatose 6-phosphate from D-galactose 6-phosphate: step 1/1. The chain is Galactose-6-phosphate isomerase subunit LacA 1 from Streptococcus pyogenes serotype M3 (strain SSI-1).